Reading from the N-terminus, the 514-residue chain is 2,3-bisphosphoglycerate-independent phosphoglycerate mutase (514 aa).

Mn(2+)-binding residues include D14 and S64. S64 functions as the Phosphoserine intermediate in the catalytic mechanism. Substrate contacts are provided by residues H125, 155-156 (RD), R187, R193, 263-266 (RADR), and K336. D403, H407, D444, H445, and H463 together coordinate Mn(2+).

Belongs to the BPG-independent phosphoglycerate mutase family. As to quaternary structure, monomer. Mn(2+) serves as cofactor.

The enzyme catalyses (2R)-2-phosphoglycerate = (2R)-3-phosphoglycerate. Its pathway is carbohydrate degradation; glycolysis; pyruvate from D-glyceraldehyde 3-phosphate: step 3/5. In terms of biological role, catalyzes the interconversion of 2-phosphoglycerate and 3-phosphoglycerate. This chain is 2,3-bisphosphoglycerate-independent phosphoglycerate mutase, found in Enterobacter sp. (strain 638).